Here is a 978-residue protein sequence, read N- to C-terminus: MGFNPQGQGNGPNYDAPREMQDLPAGQAYHFRESDETAAARVSPVSNPYEPDYDQLSPPPPLGAQRPVPEQNESSRDLLHSSYQGSVGHNSFDGHSFGHNSYGPGAFGHYPADQHGRMPGSPGYEYPEPEYDVEASRLAESRLSVMHRAPTMQDWGQNGEALSVPDFAHGRPDSTYQEFDVDESWMMRQQQNQLAGGLGRSKTRKVKLVQGSVLSIDYPVPSAIKNAVEPRYRSGPGSMEEEFTKMRYTAATCDPNDFTLRNGFNLRPKMYNRHTELLIAITYYNEDKVLLARTLHGTMQNIRDIVNLKRSKFWNKGGPAWQKIVVCLVFDGIDKVDKNVFDVLATVGIYQDGVLKKDVNGKETVAHIFEYTSQVSVTPDQQLVRPDPDKPHRNLPPVQFIFCLKQKNSKKINSHRWLFNAFGRILNPEVAILIDAGTKPGPRALLSLWEGFYNDRDLGGACGEIHVMLGKGGKMLLNPLVAVQNFEYKISNVLDKPLESAFGYVSVLPGAFSAYRFRAIMGRPLEQYFHGDHTLSKSLGKKGIDGMNIFKKNMFLAEDRILCFELVAKASQKWHLSYIKASKGETDVPEGAAEFIGQRRRWLNGSFAMSLYSLMHFGRMYGSGHNLIRLFFLHIQFVYNLVNVLFSWFSLAAFYLTTTIIMKLVGTPQVLSEYHGWPFGDTATPIVNVLIKYIYIAFLVLQFVLALGNRPKGAQYTYVLSFMVFGLIQLYLLVLTGYLVYRAFTGTPIEEQISFESGKAFFDSFFGGDTGVAGLIIIALFTIYGLNYIASFLYLDPWHMFHSFPQYLVLMSTYINILMVYAFNNWHDVSWGTKGSDTAEALPSAMIVKDEKGKEAVVEEIEQEQEDIDSKFEKVVWRALAPMSEMAEEKPEKKDVEDSYKSFRTGLVILWLLCNIVLIVVVTTDDFITLGVSKAADVRTPTYFRVLLYSTAVLSIVRFFGFLWFIGRTGIMCCIARR.

Residues 1–13 (MGFNPQGQGNGPN) show a composition bias toward low complexity. Disordered stretches follow at residues 1–95 (MGFN…FDGH) and 108–127 (GHYP…YEYP). The N-linked (GlcNAc...) asparagine glycan is linked to N72. An N-linked (GlcNAc...) asparagine glycan is attached at N604. Helical transmembrane passes span 641–661 (LVNV…TTII), 686–706 (IVNV…FVLA), 719–739 (VLSF…TGYL), 775–795 (LIII…FLYL), 803–823 (SFPQ…VYAF), 908–928 (VILW…DDFI), and 946–966 (VLLY…LWFI).

It belongs to the chitin synthase family. Class III subfamily.

The protein resides in the cell membrane. The enzyme catalyses [(1-&gt;4)-N-acetyl-beta-D-glucosaminyl](n) + UDP-N-acetyl-alpha-D-glucosamine = [(1-&gt;4)-N-acetyl-beta-D-glucosaminyl](n+1) + UDP + H(+). Functionally, polymerizes chitin, a structural polymer of the cell wall and septum, by transferring the sugar moiety of UDP-GlcNAc to the non-reducing end of the growing chitin polymer. Is essential for viability. This Fusarium oxysporum f. sp. lycopersici (strain 4287 / CBS 123668 / FGSC 9935 / NRRL 34936) (Fusarium vascular wilt of tomato) protein is Chitin synthase 3.